The chain runs to 188 residues: Ribosome biogenesis protein RLP24 (188 aa).

Residues 140–188 form a disordered region; sequence ELRRMQEAGEDDDDEDMSEMEVSEEEESEEEREKVEIALKSKSKRKMRA. Residues 147 to 169 show a composition bias toward acidic residues; it reads AGEDDDDEDMSEMEVSEEEESEE.

The protein belongs to the eukaryotic ribosomal protein eL24 family. As to quaternary structure, associated with nucleolar and cytoplasmic pre-60S particles. At the end of biogenesis it dissociates from cytoplasmic pre-60S particles and is likely to be exchanged for its ribosomal homolog, RPL24.

It localises to the cytoplasm. It is found in the nucleus. Functionally, involved in the biogenesis of the 60S ribosomal subunit. Ensures the docking of YALI0_B00990g/NOG1 to pre-60S particles. Activates and recruits ATPase AFG2 to cytoplasmic pre-60S ribosomal particles. The polypeptide is Ribosome biogenesis protein RLP24 (RLP24) (Yarrowia lipolytica (strain CLIB 122 / E 150) (Yeast)).